The primary structure comprises 168 residues: Small ribosomal subunit protein uS5 (168 aa).

Positions 13-76 constitute an S5 DRBM domain; the sequence is LQEKLIAVNR…EKARRNMVTV (64 aa).

Belongs to the universal ribosomal protein uS5 family. Part of the 30S ribosomal subunit. Contacts proteins S4 and S8.

With S4 and S12 plays an important role in translational accuracy. Functionally, located at the back of the 30S subunit body where it stabilizes the conformation of the head with respect to the body. This Shewanella amazonensis (strain ATCC BAA-1098 / SB2B) protein is Small ribosomal subunit protein uS5.